Reading from the N-terminus, the 457-residue chain is Methylenetetrahydrofolate--tRNA-(uracil-5-)-methyltransferase TrmFO (457 aa).

8-13 (GGGLAG) contributes to the FAD binding site.

It belongs to the MnmG family. TrmFO subfamily. It depends on FAD as a cofactor.

It localises to the cytoplasm. It catalyses the reaction uridine(54) in tRNA + (6R)-5,10-methylene-5,6,7,8-tetrahydrofolate + NADH + H(+) = 5-methyluridine(54) in tRNA + (6S)-5,6,7,8-tetrahydrofolate + NAD(+). It carries out the reaction uridine(54) in tRNA + (6R)-5,10-methylene-5,6,7,8-tetrahydrofolate + NADPH + H(+) = 5-methyluridine(54) in tRNA + (6S)-5,6,7,8-tetrahydrofolate + NADP(+). In terms of biological role, catalyzes the folate-dependent formation of 5-methyl-uridine at position 54 (M-5-U54) in all tRNAs. In Thermosynechococcus vestitus (strain NIES-2133 / IAM M-273 / BP-1), this protein is Methylenetetrahydrofolate--tRNA-(uracil-5-)-methyltransferase TrmFO.